Consider the following 248-residue polypeptide: MKIIIAPAKKMIIDQDAFPALTEPIYLDQTQQLLAQLQHLTYPEAKTLWHCSDKLAQPNYDWLQKIDLTRNLTPAILSYSGIQYRYMAPDVFTQPALDYIQANLRILSGFYGILRPFDGIVPYRLEMQARLAVGQAKNLYAFWGDRLYQALTPRPEPIINLASQEYAKTIAPYLAPHQSMIDIVFASFIDGKLKTKATLARMARGAMVRFLAEHQIDDVTAIRTFDHPDYQFDEKRSTANRFVFIYQH.

Belongs to the UPF0246 family.

The chain is UPF0246 protein lp_0089 from Lactiplantibacillus plantarum (strain ATCC BAA-793 / NCIMB 8826 / WCFS1) (Lactobacillus plantarum).